A 337-amino-acid chain; its full sequence is DNA-directed RNA polymerase subunit alpha (337 aa).

The tract at residues 1–226 (MLIAQRPTLT…ELFGLARELN (226 aa)) is alpha N-terminal domain (alpha-NTD). The tract at residues 243–337 (LAADLALEIE…DTSFAEDEQL (95 aa)) is alpha C-terminal domain (alpha-CTD). The interval 315–337 (FDPSAVVNDFEDDDTSFAEDEQL) is disordered. Residues 323-337 (DFEDDDTSFAEDEQL) are compositionally biased toward acidic residues.

The protein belongs to the RNA polymerase alpha chain family. Homodimer. The RNAP catalytic core consists of 2 alpha, 1 beta, 1 beta' and 1 omega subunit. When a sigma factor is associated with the core the holoenzyme is formed, which can initiate transcription.

The enzyme catalyses RNA(n) + a ribonucleoside 5'-triphosphate = RNA(n+1) + diphosphate. Its function is as follows. DNA-dependent RNA polymerase catalyzes the transcription of DNA into RNA using the four ribonucleoside triphosphates as substrates. The polypeptide is DNA-directed RNA polymerase subunit alpha (Kineococcus radiotolerans (strain ATCC BAA-149 / DSM 14245 / SRS30216)).